The chain runs to 240 residues: Probable transcriptional activator (240 aa).

The essential for the oxygen-regulated activity stretch occupies residues 17–28; it reads CTSCQARHGVVC. The region spanning 158 to 232 is the HTH crp-type domain; sequence RTAEEKVASL…FRHIIVPDMD (75 aa). A DNA-binding region (H-T-H motif) is located at residues 191 to 210; the sequence is RAEIADFLGLTIETVSRQMT.

Its function is as follows. Promotes the microaerobic and symbiotic induction of fixN, possibly by binding to the FNR consensus binding site upstream of fixN. This is Probable transcriptional activator (fnrN) from Rhizobium leguminosarum bv. viciae.